The following is a 152-amino-acid chain: Anaerobic nitrite reductase SYMA (152 aa).

The region spanning 2-151 is the Globin domain; sequence ALTERQEALL…LVATIKAEMK (150 aa). The short motif at 35 to 39 is the Homodimerization element; sequence EAAPE. Serine 45, lysine 59, histidine 63, arginine 93, and histidine 98 together coordinate heme b. The Homodimerization motif lies at 105-117; sequence DPHFEVMKGALLG.

The protein belongs to the plant globin family. In terms of assembly, homodimer. Requires heme b as cofactor. In terms of tissue distribution, root nodules.

It localises to the cytoplasm. It is found in the nucleus. The catalysed reaction is Fe(III)-heme b-[protein] + nitric oxide + H2O = Fe(II)-heme b-[protein] + nitrite + 2 H(+). Phytoglobin that reduces nitrite to nitric oxide (NO) under anoxic conditions (e.g. during flooding or in waterlogged soil) and upon root nodulation. Required for general plant development and during nodulation, especially for the onset of symbiosis. Monitors nitric oxide (NO) levels during early phase of the nitrogen-fixing symbiosis and buffers oxygen in functioning nodules. May not function as an oxygen storage or transport protein. Has an unusually high affinity for O(2) through a hexacoordinate heme iron because of a very low dissociation constant. The chain is Anaerobic nitrite reductase SYMA from Casuarina glauca (Swamp oak).